A 215-amino-acid chain; its full sequence is 7-methyl-GTP pyrophosphatase (215 aa).

Asp-79 functions as the Proton acceptor in the catalytic mechanism.

Belongs to the Maf family. YceF subfamily. The cofactor is a divalent metal cation.

The protein resides in the cytoplasm. It catalyses the reaction N(7)-methyl-GTP + H2O = N(7)-methyl-GMP + diphosphate + H(+). Nucleoside triphosphate pyrophosphatase that hydrolyzes 7-methyl-GTP (m(7)GTP). May have a dual role in cell division arrest and in preventing the incorporation of modified nucleotides into cellular nucleic acids. The chain is 7-methyl-GTP pyrophosphatase from Burkholderia mallei (strain ATCC 23344).